Here is an 823-residue protein sequence, read N- to C-terminus: Protein Jade-3 (823 aa).

The interval 1–32 is disordered; it reads MKRHRPVSSSDSSDESPSTSFTSGSMYRIKSK. The span at 8–25 shows a compositional bias: low complexity; sequence SSSDSSDESPSTSFTSGS. Lys30 and Lys32 each carry N6-acetyllysine. Ser85 is subject to Phosphoserine. Residues 200–250 form a PHD-type 1 zinc finger; sequence DVICDVCRSPDSEEGNDMVFCDKCNVCVHQACYGILKVPEGSWLCRSCVLG. The C2HC pre-PHD-type zinc-finger motif lies at 252 to 286; the sequence is YPQCVLCPKKGGALKTTKTGTKWAHVSCALWIPEV. The segment at 310–366 adopts a PHD-type 2 zinc-finger fold; sequence LVCNLCKLKTGACIQCSIKSCITAFHVTCAFEHGLEMKTILDEGDEVKFKSYCLKHS. Disordered regions lie at residues 372-395 and 542-576; these read LGEA…KTSL and KLKM…VHSI. Over residues 561 to 575 the composition is skewed to low complexity; sequence DQQPHSPDSSSSVHS. A Phosphoserine modification is found at Ser566. Lys601 is subject to N6-acetyllysine. At Ser608 the chain carries Phosphoserine. The disordered stretch occupies residues 609 to 630; the sequence is LSHSRSEAKESSPAWRTPSSEC. Lys638 bears the N6-acetyllysine mark. Polar residues-rich tracts occupy residues 650 to 664 and 673 to 684; these read SSIG…SKFA and WSGNVTQKDSSS. Positions 650–684 are disordered; sequence SSIGNGKSQPNSKFAKSNGLEGSWSGNVTQKDSSS. An N6-acetyllysine modification is found at Lys735. Residues 758 to 823 are disordered; the sequence is RAPYQENDGY…HPLSHSSMQR (66 aa). Phosphoserine is present on residues Ser774, Ser776, and Ser780. Positions 781–809 are enriched in basic and acidic residues; that stretch reads DGNKEKVRVRKDSSDRENPPHDSRRDCHG.

It belongs to the JADE family. In terms of assembly, component of the HBO1 complex composed at least of ING4 or ING5, KAT7/HBO1, MEAF6, and one of JADE1, JADE2 and JADE3. As to expression, ubiquitously expressed, with highest levels in placenta and uterus.

In terms of biological role, scaffold subunit of some HBO1 complexes, which have a histone H4 acetyltransferase activity. The chain is Protein Jade-3 (JADE3) from Homo sapiens (Human).